The sequence spans 347 residues: Holliday junction branch migration complex subunit RuvB (347 aa).

Positions 1–186 (MKDENSINFL…FGITARFELY (186 aa)) are large ATPase domain (RuvB-L). ATP-binding positions include leucine 25, arginine 26, glycine 67, lysine 70, threonine 71, threonine 72, 133-135 (EDY), arginine 176, tyrosine 186, and arginine 223. A Mg(2+)-binding site is contributed by threonine 71. The tract at residues 187-257 (SEIELVEIIK…IVAIGLEMLR (71 aa)) is small ATPAse domain (RuvB-S). The segment at 260–347 (GEGLDEQDRN…NLNENQRVSF (88 aa)) is head domain (RuvB-H). DNA is bound by residues arginine 315 and arginine 320.

It belongs to the RuvB family. As to quaternary structure, homohexamer. Forms an RuvA(8)-RuvB(12)-Holliday junction (HJ) complex. HJ DNA is sandwiched between 2 RuvA tetramers; dsDNA enters through RuvA and exits via RuvB. An RuvB hexamer assembles on each DNA strand where it exits the tetramer. Each RuvB hexamer is contacted by two RuvA subunits (via domain III) on 2 adjacent RuvB subunits; this complex drives branch migration. In the full resolvosome a probable DNA-RuvA(4)-RuvB(12)-RuvC(2) complex forms which resolves the HJ.

The protein resides in the cytoplasm. It catalyses the reaction ATP + H2O = ADP + phosphate + H(+). Its function is as follows. The RuvA-RuvB-RuvC complex processes Holliday junction (HJ) DNA during genetic recombination and DNA repair, while the RuvA-RuvB complex plays an important role in the rescue of blocked DNA replication forks via replication fork reversal (RFR). RuvA specifically binds to HJ cruciform DNA, conferring on it an open structure. The RuvB hexamer acts as an ATP-dependent pump, pulling dsDNA into and through the RuvAB complex. RuvB forms 2 homohexamers on either side of HJ DNA bound by 1 or 2 RuvA tetramers; 4 subunits per hexamer contact DNA at a time. Coordinated motions by a converter formed by DNA-disengaged RuvB subunits stimulates ATP hydrolysis and nucleotide exchange. Immobilization of the converter enables RuvB to convert the ATP-contained energy into a lever motion, pulling 2 nucleotides of DNA out of the RuvA tetramer per ATP hydrolyzed, thus driving DNA branch migration. The RuvB motors rotate together with the DNA substrate, which together with the progressing nucleotide cycle form the mechanistic basis for DNA recombination by continuous HJ branch migration. Branch migration allows RuvC to scan DNA until it finds its consensus sequence, where it cleaves and resolves cruciform DNA. This chain is Holliday junction branch migration complex subunit RuvB, found in Borreliella afzelii (strain PKo) (Borrelia afzelii).